The primary structure comprises 453 residues: MREVISIHVGQAGIQIGNACWELFCLEHGIQPDGQMPSDKTIGGGDDAFNTFFSETGAGKHVPRCVFLDLEPTVVDEVRTGTYRHLFHPEQLISGKEDAANNFARGHYTIGKEIVDLSLDRIRKLADNCTGLQGFLMFNAVGGGTGSGLGCLLLERLSVDYGKKSKLNFCSWPSPQVSTAVVEPYNSVLSTHSLLEHTDVAVMLDNEAIYDICRRNLDIERPTYTNLNRLIAQVISSLTASLRFDGALNVDVTEFQTNLVPYPRIHFMLSSYAPIISAEKAYHEQLSVAEITNSAFEPASMMAKCDPRHGKYMACCLMYRGDVVPKDVNAAVATIKTKRTIQFVDWCPTGFKCGINYQPPTVVPGGDLAKVMRAVCMISNSTAIAEVFSRMDHKFDLMYAKRAFVHWYVGEGMEEGEFSEAREDLAALEKDYEEVGIETAEGEGEEEGYGDEY.

Q11 serves as a coordination point for GTP. K40 carries the post-translational modification N6-acetyllysine. GTP contacts are provided by E71, G144, T145, T179, N206, and N228. A Mg(2+)-binding site is contributed by E71. E254 is an active-site residue.

It belongs to the tubulin family. Dimer of alpha and beta chains. A typical microtubule is a hollow water-filled tube with an outer diameter of 25 nm and an inner diameter of 15 nM. Alpha-beta heterodimers associate head-to-tail to form protofilaments running lengthwise along the microtubule wall with the beta-tubulin subunit facing the microtubule plus end conferring a structural polarity. Microtubules usually have 13 protofilaments but different protofilament numbers can be found in some organisms and specialized cells. Mg(2+) is required as a cofactor. Undergoes a tyrosination/detyrosination cycle, the cyclic removal and re-addition of a C-terminal tyrosine residue by the enzymes tubulin tyrosine carboxypeptidase (TTCP) and tubulin tyrosine ligase (TTL), respectively. In terms of processing, acetylation of alpha chains at Lys-40 stabilizes microtubules and affects affinity and processivity of microtubule motors. This modification has a role in multiple cellular functions, ranging from cell motility, cell cycle progression or cell differentiation to intracellular trafficking and signaling.

The protein resides in the cytoplasm. The protein localises to the cytoskeleton. It catalyses the reaction GTP + H2O = GDP + phosphate + H(+). In terms of biological role, tubulin is the major constituent of microtubules, a cylinder consisting of laterally associated linear protofilaments composed of alpha- and beta-tubulin heterodimers. Microtubules grow by the addition of GTP-tubulin dimers to the microtubule end, where a stabilizing cap forms. Below the cap, tubulin dimers are in GDP-bound state, owing to GTPase activity of alpha-tubulin. The polypeptide is Tubulin alpha chain (TUBA) (Neospora caninum (Coccidian parasite)).